We begin with the raw amino-acid sequence, 448 residues long: Nicotinate phosphoribosyltransferase pncB1 (448 aa).

The disordered stretch occupies residues 1–21 (MGPPPAARRREGEPDNQDPAG). Residue histidine 212 is modified to Phosphohistidine. The segment at 353–372 (RSSYKESPGGRKEALRRSRA) is disordered.

This sequence belongs to the NAPRTase family. Transiently phosphorylated on a His residue during the reaction cycle. Phosphorylation strongly increases the affinity for substrates and increases the rate of nicotinate D-ribonucleotide production. Dephosphorylation regenerates the low-affinity form of the enzyme, leading to product release.

The catalysed reaction is nicotinate + 5-phospho-alpha-D-ribose 1-diphosphate + ATP + H2O = nicotinate beta-D-ribonucleotide + ADP + phosphate + diphosphate. It participates in cofactor biosynthesis; NAD(+) biosynthesis; nicotinate D-ribonucleotide from nicotinate: step 1/1. Involved in the Preiss-Handler pathway, which is a recycling route that permits the salvage of free nicotinamide (NM) and nicotinic acid (Na) involved in the NAD biosynthesis. Catalyzes the synthesis of beta-nicotinate D-ribonucleotide from nicotinate and 5-phospho-D-ribose 1-phosphate at the expense of ATP. It is not able to use nicotinamide. PncB1 contributes to basal NAD level. In Mycobacterium tuberculosis (strain ATCC 25618 / H37Rv), this protein is Nicotinate phosphoribosyltransferase pncB1 (pncB1).